The sequence spans 557 residues: Predicted GPI-anchored protein 17 (557 aa).

The first 19 residues, 1–19 (MKFSTVFTAIFALGTAVSA), serve as a signal peptide directing secretion. Residues asparagine 62, asparagine 116, asparagine 284, and asparagine 309 are each glycosylated (N-linked (GlcNAc...) asparagine). Positions 320-355 (LRKREYNDAVEAALRDIQKREEGIDDVEIALRKMKR) form a coiled coil. Residues asparagine 376, asparagine 471, and asparagine 520 are each glycosylated (N-linked (GlcNAc...) asparagine). A lipid anchor (GPI-anchor amidated asparagine) is attached at asparagine 533. Positions 534 to 557 (AGSSYGPGFYSTIFAVFGLFAMMI) are cleaved as a propeptide — removed in mature form.

Substrate for cleavage by KEX2 in vitro.

Its subcellular location is the cell membrane. Predicted GPI-anchored protein which may have a role during host infection. The chain is Predicted GPI-anchored protein 17 (PGA17) from Candida albicans (strain SC5314 / ATCC MYA-2876) (Yeast).